Reading from the N-terminus, the 414-residue chain is Serine hydroxymethyltransferase (414 aa).

Residues L121 and 125–127 (GHL) contribute to the (6S)-5,6,7,8-tetrahydrofolate site. Position 229 is an N6-(pyridoxal phosphate)lysine (K229).

The protein belongs to the SHMT family. Homodimer. Pyridoxal 5'-phosphate is required as a cofactor.

Its subcellular location is the cytoplasm. The enzyme catalyses (6R)-5,10-methylene-5,6,7,8-tetrahydrofolate + glycine + H2O = (6S)-5,6,7,8-tetrahydrofolate + L-serine. It functions in the pathway one-carbon metabolism; tetrahydrofolate interconversion. It participates in amino-acid biosynthesis; glycine biosynthesis; glycine from L-serine: step 1/1. Its function is as follows. Catalyzes the reversible interconversion of serine and glycine with tetrahydrofolate (THF) serving as the one-carbon carrier. This reaction serves as the major source of one-carbon groups required for the biosynthesis of purines, thymidylate, methionine, and other important biomolecules. Also exhibits THF-independent aldolase activity toward beta-hydroxyamino acids, producing glycine and aldehydes, via a retro-aldol mechanism. The polypeptide is Serine hydroxymethyltransferase (Acidovorax ebreus (strain TPSY) (Diaphorobacter sp. (strain TPSY))).